The chain runs to 477 residues: MSELQSRTSPFSGGLFIKTYGCQMNEYDSDRMAKLLEKTYGLNLVETPEEADMLLLNTCSVREKAQEKVFDELGRWKKWKAAKPNRVIGVGGCVASQEGDVIRKRAPLVDVIFGPQTLHRLPAMIEEALALRTATEQDKKLKKRAIIDISFPEIEKFDNLAEPESNGVSAFVSVMEGCSKYCTFCVVPYTRGEEFSRPFSDVMAEIESLAKQGVREVNLLGQNVNAYRGEMPDGEMADLAVLIHAVRAVEGIDRIRFTTSHPNEMTQSLIDCYAEVPELVSHLHLPIQSGSDRVLAMMKRNHMAIEYKATIRKIKKIRPDLSLSGDFIIGFPGETCDDFKETLALVKEMNYDRSFSFIYSPRPGTPAASLPDDVELHMKKRRLQALQAMLNEQTAAISEGMVGTTQRVLVERLSRNSTNEVSGRTENNRVVNFEGPPELIGQFVDVLIEEAYANSLKGKLVATPEAEQFNQRQFYAL.

Positions 13-130 (GGLFIKTYGC…LPAMIEEALA (118 aa)) constitute an MTTase N-terminal domain. C22, C59, C93, C178, C182, and C185 together coordinate [4Fe-4S] cluster. The 233-residue stretch at 164–396 (ESNGVSAFVS…QAMLNEQTAA (233 aa)) folds into the Radical SAM core domain. Positions 399-462 (EGMVGTTQRV…ANSLKGKLVA (64 aa)) constitute a TRAM domain.

The protein belongs to the methylthiotransferase family. MiaB subfamily. Monomer. [4Fe-4S] cluster is required as a cofactor.

It localises to the cytoplasm. The enzyme catalyses N(6)-dimethylallyladenosine(37) in tRNA + (sulfur carrier)-SH + AH2 + 2 S-adenosyl-L-methionine = 2-methylsulfanyl-N(6)-dimethylallyladenosine(37) in tRNA + (sulfur carrier)-H + 5'-deoxyadenosine + L-methionine + A + S-adenosyl-L-homocysteine + 2 H(+). Its function is as follows. Catalyzes the methylthiolation of N6-(dimethylallyl)adenosine (i(6)A), leading to the formation of 2-methylthio-N6-(dimethylallyl)adenosine (ms(2)i(6)A) at position 37 in tRNAs that read codons beginning with uridine. This Hydrogenovibrio crunogenus (strain DSM 25203 / XCL-2) (Thiomicrospira crunogena) protein is tRNA-2-methylthio-N(6)-dimethylallyladenosine synthase.